We begin with the raw amino-acid sequence, 1007 residues long: Exportin-7 (1007 aa).

This sequence belongs to the exportin family.

Its subcellular location is the nucleus. It is found in the cytoplasm. It localises to the nuclear pore complex. Functionally, mediates the nuclear export of proteins (cargos) with broad substrate specificity. The protein is Exportin-7 (xpo7) of Dictyostelium discoideum (Social amoeba).